Reading from the N-terminus, the 148-residue chain is Lysozyme-like protein 1 (148 aa).

Residues 1-19 (MKSVGVFALIISFSIVAES) form the signal peptide. One can recognise a C-type lysozyme domain in the interval 20 to 148 (KIYTRCKLAK…SEWKRGCEVS (129 aa)). 4 disulfide bridges follow: C25-C145, C49-C133, C83-C98, and C94-C112. E54 is an active-site residue. Residue N58 is glycosylated (N-linked (GlcNAc...) asparagine). D71 is a catalytic residue.

Belongs to the glycosyl hydrolase 22 family. In terms of assembly, monomer.

Its subcellular location is the secreted. It carries out the reaction Hydrolysis of (1-&gt;4)-beta-linkages between N-acetylmuramic acid and N-acetyl-D-glucosamine residues in a peptidoglycan and between N-acetyl-D-glucosamine residues in chitodextrins.. This chain is Lysozyme-like protein 1 (Lyzl1), found in Mus musculus (Mouse).